The primary structure comprises 31 residues: ALWKTMLKKLGTMALHAGKAAFGAAADTISQ.

Belongs to the frog skin active peptide (FSAP) family. Dermaseptin subfamily. In terms of tissue distribution, expressed by the skin glands.

The protein resides in the secreted. Functionally, antibacterial activity against Gram-positive bacteria S.aureus and E.faecalis, and Gram-negative bacteria P.aeruginosa and E.coli. The polypeptide is Dermaseptin-DI3 (Phyllomedusa distincta (Monkey frog)).